A 421-amino-acid polypeptide reads, in one-letter code: L-Ala-D/L-amino acid epimerase (421 aa).

Residues Thr-193 and 218 to 220 contribute to the substrate site; that span reads KLK. 3 residues coordinate Mg(2+): Asp-247, Glu-275, and Asp-304. Residues Lys-328 and 380-382 each bind substrate; that span reads DLD.

The protein belongs to the mandelate racemase/muconate lactonizing enzyme family. The cofactor is Mg(2+).

In terms of biological role, catalyzes the epimerization of various hydrophobic and polar dipeptides. Has epimerase activity with L-Ala-L-Ala, L-Ala-L-Ser, L-Ala-L-Thr and L-Ala-L-Trp (in vitro). The polypeptide is L-Ala-D/L-amino acid epimerase (Populus trichocarpa (Western balsam poplar)).